The sequence spans 335 residues: UDP-N-acetylenolpyruvoylglucosamine reductase 1 (335 aa).

The FAD-binding PCMH-type domain maps to 36 to 202; the sequence is RIGGPAAVFA…LEVELLLKPG (167 aa). Arg-181 is an active-site residue. Residue Ser-231 is the Proton donor of the active site. Residue Glu-306 is part of the active site.

This sequence belongs to the MurB family. FAD serves as cofactor.

Its subcellular location is the cytoplasm. The enzyme catalyses UDP-N-acetyl-alpha-D-muramate + NADP(+) = UDP-N-acetyl-3-O-(1-carboxyvinyl)-alpha-D-glucosamine + NADPH + H(+). It participates in cell wall biogenesis; peptidoglycan biosynthesis. Its function is as follows. Cell wall formation. This is UDP-N-acetylenolpyruvoylglucosamine reductase 1 (murB1) from Corynebacterium glutamicum (strain ATCC 13032 / DSM 20300 / JCM 1318 / BCRC 11384 / CCUG 27702 / LMG 3730 / NBRC 12168 / NCIMB 10025 / NRRL B-2784 / 534).